The chain runs to 848 residues: Protein MEI2-like 2 (848 aa).

RRM domains are found at residues 197 to 270 and 282 to 355; these read RTLF…FSIP and GTLV…PSRP. 3 disordered regions span residues 370–400, 455–523, and 826–848; these read IDQD…QYSS, NQPH…SQGQ, and ATGD…GEEL.

In terms of biological role, probable RNA-binding protein that may play a role in growth regulation. The sequence is that of Protein MEI2-like 2 (ML2) from Oryza sativa subsp. japonica (Rice).